Here is a 161-residue protein sequence, read N- to C-terminus: Glycine-rich RNA-binding protein blt801 (161 aa).

One can recognise an RRM domain in the interval 6–84 (YRCFVGGLRW…RNITVNEAQS (79 aa)). The disordered stretch occupies residues 72-161 (LDGRNITVNE…GGSGGGNWRE (90 aa)). Position 87 is a phosphoserine; by PKA (Ser-87). The segment covering 89–161 (GGGGFGGGGG…GGSGGGNWRE (73 aa)) has biased composition (gly residues).

Its function is as follows. Binds single-stranded DNA and homoribopolymers of guanine, uracil and adenine, but not cytosine. Also binds RNA, with a preference for RNA containing a high proportion of adenine within an open loop structure. Possibly has a role in RNA transcription or processing during stress. The protein is Glycine-rich RNA-binding protein blt801 of Hordeum vulgare (Barley).